A 626-amino-acid polypeptide reads, in one-letter code: Lysine--tRNA ligase, cytoplasmic (626 aa).

Residue Met-1 is modified to N-acetylmethionine. Polar residues-rich tracts occupy residues 1–11 and 18–27; these read MEGAADQTTKA and DSSTTLNAAE. The disordered stretch occupies residues 1-84; that stretch reads MEGAADQTTK…QKAVAADDEE (84 aa). A coiled-coil region spans residues 37–69; it reads RSKNALKKEQKMKQKEEEKRRKDEEKAEKAKQA. Over residues 42 to 67 the composition is skewed to basic and acidic residues; that stretch reads LKKEQKMKQKEEEKRRKDEEKAEKAK. Over residues 69 to 78 the composition is skewed to low complexity; it reads APKASSQKAV. The OB DNA-binding region spans 141–217; that stretch reads SLAGRIMSKR…RGELSIFPRS (77 aa). Substrate contacts are provided by Gly-313 and Glu-337. ATP is bound by residues 359-361 and 367-368; these read RNE and HN. Substrate-binding residues include Glu-375 and Tyr-377. 2 residues coordinate Ca(2+): Glu-521 and Glu-528. 528 to 529 is a binding site for ATP; the sequence is EL. Substrate contacts are provided by Asn-531 and Glu-535. Residue 584–587 participates in ATP binding; it reads GIDR.

The protein belongs to the class-II aminoacyl-tRNA synthetase family. It depends on Ca(2+) as a cofactor.

It localises to the cytoplasm. Its subcellular location is the cytosol. The enzyme catalyses tRNA(Lys) + L-lysine + ATP = L-lysyl-tRNA(Lys) + AMP + diphosphate. In terms of biological role, catalyzes the specific attachment of an amino acid to its cognate tRNA in a 2 step reaction: the amino acid (AA) is first activated by ATP to form AA-AMP and then transferred to the acceptor end of the tRNA. Promotes aminoacylation of non-cognate tRNAs and translational recoding of lysine at nonsense codons. The protein is Lysine--tRNA ligase, cytoplasmic of Arabidopsis thaliana (Mouse-ear cress).